The sequence spans 73 residues: UPF0154 protein LJ_1506 (73 aa).

Residues 3-23 form a helical membrane-spanning segment; the sequence is LGLAIFLIIIALLIGLVGGFY.

It belongs to the UPF0154 family.

The protein resides in the cell membrane. The protein is UPF0154 protein LJ_1506 of Lactobacillus johnsonii (strain CNCM I-12250 / La1 / NCC 533).